We begin with the raw amino-acid sequence, 161 residues long: Regulator of ribonuclease activity A (161 aa).

The protein belongs to the RraA family. As to quaternary structure, homotrimer. Binds to both RNA-binding sites in the C-terminal region of Rne and to RhlB.

The protein resides in the cytoplasm. In terms of biological role, globally modulates RNA abundance by binding to RNase E (Rne) and regulating its endonucleolytic activity. Can modulate Rne action in a substrate-dependent manner by altering the composition of the degradosome. Modulates RNA-binding and helicase activities of the degradosome. The chain is Regulator of ribonuclease activity A from Yersinia pseudotuberculosis serotype O:1b (strain IP 31758).